The primary structure comprises 98 residues: MAPRKPSKKVGPQKRPSAEKRVITSKKKQLRNQSFKSKVRTILKKFELAVQSGDVESISAGLRSVYSIADKAVKRGIFKKGKADRVKSRTSERACPAA.

Over residues 1-12 (MAPRKPSKKVGP) the composition is skewed to basic residues. The disordered stretch occupies residues 1-31 (MAPRKPSKKVGPQKRPSAEKRVITSKKKQLR).

Belongs to the bacterial ribosomal protein bS20 family.

Its function is as follows. Binds directly to 16S ribosomal RNA. This Chlamydia trachomatis serovar A (strain ATCC VR-571B / DSM 19440 / HAR-13) protein is Small ribosomal subunit protein bS20.